Reading from the N-terminus, the 660-residue chain is Cysteine--tRNA ligase, cytoplasmic (660 aa).

The segment covering Met1–Glu10 has biased composition (polar residues). The interval Met1–Lys20 is disordered. Residue Cys65 participates in Zn(2+) binding. A 'HIGH' region motif is present at residues Pro67 to His77. Cys256, His281, and Glu285 together coordinate Zn(2+). A 'KMSKS' region motif is present at residues Lys314 to Ser318. An ATP-binding site is contributed by Lys317. Disordered regions lie at residues Ile563–Lys584 and Gln627–Gln660. Basic and acidic residues predominate over residues Gln627 to Asn639. The span at Ser643–Gln660 shows a compositional bias: low complexity.

This sequence belongs to the class-I aminoacyl-tRNA synthetase family. Zn(2+) is required as a cofactor.

It is found in the cytoplasm. The enzyme catalyses tRNA(Cys) + L-cysteine + ATP = L-cysteinyl-tRNA(Cys) + AMP + diphosphate. This chain is Cysteine--tRNA ligase, cytoplasmic (cysS), found in Dictyostelium discoideum (Social amoeba).